A 376-amino-acid polypeptide reads, in one-letter code: Chaperone protein DnaJ (376 aa).

The region spanning 5–70 (DYYEVLGLSK…QKKANYDQFG (66 aa)) is the J domain. Residues 133-215 (GVEKEISITR…CHGKGTVRKN (83 aa)) form a CR-type zinc finger. The Zn(2+) site is built by Cys-146, Cys-149, Cys-163, Cys-166, Cys-189, Cys-192, Cys-203, and Cys-206. 4 CXXCXGXG motif repeats span residues 146–153 (CDTCAGSG), 163–170 (CDKCGGTG), 189–196 (CDKCGGSG), and 203–210 (CTTCHGKG).

It belongs to the DnaJ family. As to quaternary structure, homodimer. Requires Zn(2+) as cofactor.

The protein resides in the cytoplasm. Functionally, participates actively in the response to hyperosmotic and heat shock by preventing the aggregation of stress-denatured proteins and by disaggregating proteins, also in an autonomous, DnaK-independent fashion. Unfolded proteins bind initially to DnaJ; upon interaction with the DnaJ-bound protein, DnaK hydrolyzes its bound ATP, resulting in the formation of a stable complex. GrpE releases ADP from DnaK; ATP binding to DnaK triggers the release of the substrate protein, thus completing the reaction cycle. Several rounds of ATP-dependent interactions between DnaJ, DnaK and GrpE are required for fully efficient folding. Also involved, together with DnaK and GrpE, in the DNA replication of plasmids through activation of initiation proteins. This is Chaperone protein DnaJ from Clostridium novyi (strain NT).